A 298-amino-acid polypeptide reads, in one-letter code: Probable protein phosphatase 2C 26 (298 aa).

The 248-residue stretch at 48 to 295 (SVGIHAIPHP…DDVTVIVAKV (248 aa)) folds into the PPM-type phosphatase domain. Positions 82, 83, 213, and 286 each coordinate Mn(2+).

The protein belongs to the PP2C family. Requires Mg(2+) as cofactor. It depends on Mn(2+) as a cofactor.

It catalyses the reaction O-phospho-L-seryl-[protein] + H2O = L-seryl-[protein] + phosphate. The enzyme catalyses O-phospho-L-threonyl-[protein] + H2O = L-threonyl-[protein] + phosphate. The chain is Probable protein phosphatase 2C 26 from Arabidopsis thaliana (Mouse-ear cress).